The sequence spans 62 residues: RRCFNQQSSQPQTNKSCPPGENSCYRKQWRDHRGTIIERGCGCPTVKPGIKLRCCQSEDCNN.

Residues 1 to 16 (RRCFNQQSSQPQTNKS) show a composition bias toward polar residues. The disordered stretch occupies residues 1 to 21 (RRCFNQQSSQPQTNKSCPPGE). Cystine bridges form between C3–C24, C17–C41, C43–C54, and C55–C60.

It belongs to the three-finger toxin family. Short-chain subfamily. Type I alpha-neurotoxin sub-subfamily. In terms of tissue distribution, expressed by the venom gland.

It localises to the secreted. Binds to muscle nicotinic acetylcholine receptor (nAChR) and inhibit acetylcholine from binding to the receptor, thereby impairing neuromuscular transmission. This Laticauda crockeri (Crocker's sea snake) protein is Short neurotoxin C.